The following is a 58-amino-acid chain: uncharacterized protein (58 aa).

The protein resides in the mitochondrion. This is an uncharacterized protein from Saccharomyces cerevisiae (strain ATCC 204508 / S288c) (Baker's yeast).